A 1364-amino-acid polypeptide reads, in one-letter code: Poly(A) RNA polymerase gld-2 homolog A (1364 aa).

Positions Asn27 to Ser51 are enriched in low complexity. Disordered regions lie at residues Asn27–Thr97, Ser159–Thr203, Ala315–Thr338, Ala417–Thr535, and Leu666–Ala732. The segment covering Leu66–Lys91 has biased composition (basic and acidic residues). Low complexity predominate over residues Gly175–Gly198. Residues Ala417–Ser426 show a composition bias toward low complexity. The segment covering Asp427–Asn444 has biased composition (polar residues). Basic residues predominate over residues His445–Gly455. Low complexity predominate over residues Lys461–Ile493. The segment covering Lys494–Met504 has biased composition (basic residues). Polar residues predominate over residues Thr509–Thr535. 2 residues coordinate Mg(2+): Asp993 and Asp995. The PAP-associated domain occupies Thr1163–Asn1224.

Belongs to the DNA polymerase type-B-like family. GLD2 subfamily. As to quaternary structure, interacts with Fmr1 and eIF-4E. Mg(2+) is required as a cofactor. The cofactor is Mn(2+). Expressed in the brain.

The protein resides in the cytoplasm. Its subcellular location is the nucleus. The enzyme catalyses RNA(n) + ATP = RNA(n)-3'-adenine ribonucleotide + diphosphate. In terms of biological role, cytoplasmic poly(A) RNA polymerase that adds successive AMP monomers to the 3'-end of specific RNAs, forming a poly(A) tail. In contrast to the canonical nuclear poly(A) RNA polymerase, it only adds poly(A) to selected cytoplasmic mRNAs. Required for formation of long term memory. This chain is Poly(A) RNA polymerase gld-2 homolog A (Gld2), found in Drosophila melanogaster (Fruit fly).